Consider the following 266-residue polypeptide: Heat-inducible transcription repressor HrcA (266 aa).

This sequence belongs to the HrcA family.

Negative regulator of class I heat shock genes (grpE-dnaK-dnaJ and groELS operons). Prevents heat-shock induction of these operons. This chain is Heat-inducible transcription repressor HrcA, found in Helicobacter pylori (strain ATCC 700392 / 26695) (Campylobacter pylori).